The chain runs to 276 residues: NADPH-dependent 7-cyano-7-deazaguanine reductase (276 aa).

Position 83 to 85 (83 to 85 (IES)) interacts with substrate. 85 to 86 (SK) contributes to the NADPH binding site. The active-site Thioimide intermediate is Cys-184. The active-site Proton donor is Asp-191. Substrate is bound at residue 223–224 (HE). Position 252–253 (252–253 (RG)) interacts with NADPH.

This sequence belongs to the GTP cyclohydrolase I family. QueF type 2 subfamily. As to quaternary structure, homodimer.

It is found in the cytoplasm. The enzyme catalyses 7-aminomethyl-7-carbaguanine + 2 NADP(+) = 7-cyano-7-deazaguanine + 2 NADPH + 3 H(+). It participates in tRNA modification; tRNA-queuosine biosynthesis. In terms of biological role, catalyzes the NADPH-dependent reduction of 7-cyano-7-deazaguanine (preQ0) to 7-aminomethyl-7-deazaguanine (preQ1). In Pseudomonas putida (strain ATCC 47054 / DSM 6125 / CFBP 8728 / NCIMB 11950 / KT2440), this protein is NADPH-dependent 7-cyano-7-deazaguanine reductase.